A 398-amino-acid polypeptide reads, in one-letter code: tRNA pseudouridine synthase D (398 aa).

Aspartate 76 serves as the catalytic Nucleophile. Positions 151–360 (GVPNFFGEQR…MPGERRPLRI (210 aa)) constitute a TRUD domain.

Belongs to the pseudouridine synthase TruD family.

The enzyme catalyses uridine(13) in tRNA = pseudouridine(13) in tRNA. In terms of biological role, responsible for synthesis of pseudouridine from uracil-13 in transfer RNAs. This Syntrophotalea carbinolica (strain DSM 2380 / NBRC 103641 / GraBd1) (Pelobacter carbinolicus) protein is tRNA pseudouridine synthase D.